We begin with the raw amino-acid sequence, 205 residues long: GTP cyclohydrolase-2 (205 aa).

Residue 49–53 (RLHSE) participates in GTP binding. Zn(2+) contacts are provided by cysteine 54, cysteine 65, and cysteine 67. Residues glutamine 70, 92–94 (EGR), and threonine 114 each bind GTP. The Proton acceptor role is filled by aspartate 126. The active-site Nucleophile is the arginine 128. Threonine 149 and lysine 154 together coordinate GTP.

It belongs to the GTP cyclohydrolase II family. The cofactor is Zn(2+).

The catalysed reaction is GTP + 4 H2O = 2,5-diamino-6-hydroxy-4-(5-phosphoribosylamino)-pyrimidine + formate + 2 phosphate + 3 H(+). It functions in the pathway cofactor biosynthesis; riboflavin biosynthesis; 5-amino-6-(D-ribitylamino)uracil from GTP: step 1/4. Functionally, catalyzes the conversion of GTP to 2,5-diamino-6-ribosylamino-4(3H)-pyrimidinone 5'-phosphate (DARP), formate and pyrophosphate. This chain is GTP cyclohydrolase-2, found in Pseudomonas aeruginosa (strain LESB58).